Reading from the N-terminus, the 681-residue chain is Cryptochrome-1 (681 aa).

The CNT1, binds chromophores to sense blue light and mediate CRY dimerization stretch occupies residues Met1–Ser489. Residues Gly12–Leu141 form the Photolyase/cryptochrome alpha/beta domain. Cysteines 80 and 190 form a disulfide. FAD is bound at residue Tyr235. Residue Asn238 participates in Mg(2+) binding. Arg239 provides a ligand contact to ATP. Residues Lys241, Ser244, and Thr246 each coordinate Mg(2+). FAD contacts are provided by residues Thr247–Ser251 and Ser293. His358 provides a ligand contact to Mg(2+). Residues Asp359 and Asp390–Asp392 each bind FAD. Asp359 to Arg360 lines the ATP pocket. Asp409 contacts ATP. A CCT1/CCE1, mediates blue light signaling region spans residues Gln490–Gly681. 2 disordered regions span residues Arg525–Ser598 and Ser616–Tyr664. Over residues Met583–Ser598 the composition is skewed to polar residues. Ser616 is subject to Phosphoserine. Thr621 bears the Phosphothreonine mark.

Belongs to the DNA photolyase class-1 family. In terms of assembly, homodimer. Interacts with ADO1, COP1 and PHYA. Interacts specifically with the dark/far-red (Pr) state of PHYB, but not with the red light-activated (Pfr). Interacts with PIF4 and PIF5 in the nucleus in response to low blue light (LBL). Binds to SPA1 and SPA4 in response to blue light, this interaction prevents SPA1/COP1 complex formation and thus avoid COP1-dependent degradation of the transcription factor HY5 by the proteasome and promotes hypocotyl elongation. Interacts with TCP2. Binding to ATP mediates conformational changes which facilitate flavin binding. FAD serves as cofactor. (6R)-5,10-methylene-5,6,7,8-tetrahydrofolate is required as a cofactor. In terms of processing, autophosphorylated; in response to blue light and when in complex with FAD cofactor. Kinase activity is optimal in the presence of magnesium ions, about 30 percent of the optimal activity in the presence of manganese ions, but inactive with calcium ions. Adopts an open conformation when phosphorylated upon photoexcitation and thus interacts with signaling partner proteins. Widely expressed. Expressed in the aerial tissues (e.g. cotyledons and leaf primordia), but not detected in the roots.

The protein resides in the cytoplasm. It is found in the nucleus. It localises to the PML body. Its activity is regulated as follows. Light exposure induces a conformational change in the C-terminal domain CCT1 required for activity. Functionally, photoreceptor that mediates primarily blue light inhibition of hypocotyl elongation and photoperiodic control of floral initiation, and regulates other light responses, including circadian rhythms, tropic growth, stomata opening, guard cell development, root development, bacterial and viral pathogen responses, abiotic stress responses, cell cycles, programmed cell death, apical dominance, fruit and ovule development, seed dormancy, and magnetoreception. Photoexcited cryptochromes interact with signaling partner proteins to alter gene expression at both transcriptional and post-translational levels and, consequently, regulate the corresponding metabolic and developmental programs. Blue-light absorbing flavoprotein that activates reversible flavin photoreduction via an electron transport chain comprising a tryptophan triad (W-324, W-377 and W-400), accompanied by a large conformational change upon photoexcitation, or via an alternative electron transport that involves small metabolites, including NADPH, NADH, and ATP. The half-life of the activated signaling state is about 5 minutes. Also involved in the detection of blue/green ratio in light (shade under leaf canopies) and subsequent adaptations on plant growth and development. In darkness, the dark reoxidation of flavin occurs and leads to inactivated state. Perceives low blue light (LBL) and responds by directly contacting two bHLH transcription factors, PIF4 and PIF5, at chromatin on E-box variant 5'-CA[CT]GTG-3' to promote their activity and stimulate specific gene expression to adapt global physiology (e.g. hypocotyl elongation and hyponastic growth in low blue light). When activated by high-intensity blue light, catalyzes direct enzymatic conversion of molecular oxygen O(2) to reactive oxygen species (ROS) and hydrogen peroxide H(2)O(2) in vitro. ROS accumulation upon activation by blue light leads to cell death in protoplasts. Seems essential for blue-light-triggered and singlet oxygen-mediated programmed cell death (PCD). Required for the induction of nuclear genes encoding photoprotective components by GATA24 and GATA28 in extreme light intensities that exceed the electron utilization capacity of the chloroplast. Involved in shortening the circadian clock period, especially at 27 degrees Celsius, in blue light (BL) and required to maintain clock genes expression rhythm. Mediates blue light-induced gene expression and hypocotyl elongation through the inhibition of COP1-mediated degradation of the transcription factors BIT1 and HY5 and via the activation of anion channels at the plasma membrane, probably via auxin signaling. Required for the hypocotyl hook formation in darkness. Involved in blue light-dependent stomatal opening, CHS gene expression, transpiration, inhibition of stem growth and increase of root growth, probably by regulating abscisic acid (ABA). Prevents lateral roots growth by inhibiting auxin transport. Necessary for shade avoidance syndrome (SAS), characterized by leaf hyponasty and reduced lamina/petiole ratio, when exposed to blue light attenuation. Together with phototropins, involved in phototropism regulation by various blue light fluence; blue light attenuates phototropism in high fluence rates (100 umol.m-2.s-1) but enhances phototropism in low fluence rates (&lt;1.0 umol.m-2.s-1). Required for blue/UV-A wavelengths-mediated inhibition of explants shoot regeneration in vitro (e.g. new shoot apical meristems regeneration from excised cotyledons). Modulates anthocyanin accumulation in a PHYA-dependent manner in far-red-light. Acts as a PHYA/PHYB-dependent modulator of chlorophyll accumulation in red light. Contributes to most blue light deetiolation responses. May act as a chemical magnetoreceptor, via magnetically sensitive kinetics and quantum yields of photo-induced flavin / tryptophan radical pairs. The effect of near-null magnetic field on flowering is altered by changes of blue light cycle and intensity in a CRY1/CRY2-dependent manner. Involved in the strigolactone signaling that regulates hypocotyl growth in response to blue light. Modulates temperature-dependent growth and physiology maintenance, especially at warm ambient temperatures (e.g. 27 degrees Celsius) and in white light and low-light conditions, via HFR1-dependent activity; this process requires PTAC12/HMR/PAP5 (transcriptional transactivator). In terms of biological role, implicated in promoting R protein-mediated resistance to Pseudomonas syringae pv. tomato (Pst.) DC3000 under continuous light conditions. Promotes systemic acquired resistance (SAR) and PR gene expression triggered by P.syringae. The chain is Cryptochrome-1 from Arabidopsis thaliana (Mouse-ear cress).